A 197-amino-acid polypeptide reads, in one-letter code: UDP-N-acetylglucosamine transferase subunit alg13 (197 aa).

The interval 174–197 is disordered; the sequence is VRGPDQKNQPTLEQVMSDEMGFVD.

The protein belongs to the glycosyltransferase 28 family. Heterodimer with alg14 to form a functional enzyme.

It localises to the endoplasmic reticulum. The catalysed reaction is an N-acetyl-alpha-D-glucosaminyl-diphospho-di-trans,poly-cis-dolichol + UDP-N-acetyl-alpha-D-glucosamine = an N,N'-diacetylchitobiosyl-diphospho-di-trans,poly-cis-dolichol + UDP + H(+). Functionally, involved in protein N-glycosylation. Essential for the second step of the dolichol-linked oligosaccharide pathway. This Aspergillus fumigatus (strain ATCC MYA-4609 / CBS 101355 / FGSC A1100 / Af293) (Neosartorya fumigata) protein is UDP-N-acetylglucosamine transferase subunit alg13 (alg13).